We begin with the raw amino-acid sequence, 124 residues long: LOB domain-containing protein 9 (124 aa).

The LOB domain occupies 11-113 (APCALCTTKN…IYLNELKEKI (103 aa)).

It belongs to the LOB domain-containing protein family.

This is LOB domain-containing protein 9 (LBD9) from Arabidopsis thaliana (Mouse-ear cress).